A 104-amino-acid chain; its full sequence is Small ribosomal subunit protein uS10 (104 aa).

Belongs to the universal ribosomal protein uS10 family. As to quaternary structure, part of the 30S ribosomal subunit.

Functionally, involved in the binding of tRNA to the ribosomes. The chain is Small ribosomal subunit protein uS10 from Gloeobacter violaceus (strain ATCC 29082 / PCC 7421).